Here is a 465-residue protein sequence, read N- to C-terminus: Ras-like GTPase YcjX (465 aa).

Residues 26–33 (GLSRSGKT) carry the Walker A motif motif. Residues Ser-28, Gly-31, Lys-32, Thr-33, Ala-34, Trp-95, Thr-99, and Arg-100 each contribute to the GTP site. Gly-31, Lys-32, Thr-33, Ala-34, Trp-95, and Thr-99 together coordinate GDP. N6-acetyllysine is present on Lys-249. Positions 338, 340, 341, and 380 each coordinate GTP. Lys-338, Asp-340, His-341, and Val-380 together coordinate GDP.

This sequence to H.influenzae HI_1637. In terms of assembly, monomer in solution. Mg(2+) serves as cofactor.

The enzyme catalyses GTP + H2O = GDP + phosphate + H(+). With respect to regulation, alternates between an inactive form bound to GDP and an active form bound to GTP. Likely activated by a guanine nucleotide-exchange factor (GEF). In terms of biological role, binds GTP and GDP. Has intrinsic GTPase activity. Does not hydrolyze ATP. May act as a transducer of stress responses. The polypeptide is Ras-like GTPase YcjX (ycjX) (Escherichia coli (strain K12)).